A 400-amino-acid chain; its full sequence is NADH-quinone oxidoreductase subunit D (400 aa).

Belongs to the complex I 49 kDa subunit family. As to quaternary structure, NDH-1 is composed of 14 different subunits. Subunits NuoB, C, D, E, F, and G constitute the peripheral sector of the complex.

Its subcellular location is the cell inner membrane. The enzyme catalyses a quinone + NADH + 5 H(+)(in) = a quinol + NAD(+) + 4 H(+)(out). Its function is as follows. NDH-1 shuttles electrons from NADH, via FMN and iron-sulfur (Fe-S) centers, to quinones in the respiratory chain. The immediate electron acceptor for the enzyme in this species is believed to be a menaquinone. Couples the redox reaction to proton translocation (for every two electrons transferred, four hydrogen ions are translocated across the cytoplasmic membrane), and thus conserves the redox energy in a proton gradient. This chain is NADH-quinone oxidoreductase subunit D, found in Chlorobium phaeobacteroides (strain DSM 266 / SMG 266 / 2430).